Here is a 665-residue protein sequence, read N- to C-terminus: SH3 domain-containing kinase-binding protein 1 (665 aa).

SH3 domains lie at 1 to 58 (MVEA…EIKK) and 98 to 157 (RRRR…ELSG). Ser-156, Ser-159, Ser-183, and Ser-230 each carry phosphoserine. The tract at residues 159 to 200 (SDELGISQDEQLSKSSLRETTGSESDGGDSSSTKSEGANGTV) is disordered. A compositionally biased stretch (low complexity) spans 177 to 195 (ETTGSESDGGDSSSTKSEG). Residue Thr-254 is modified to Phosphothreonine. In terms of domain architecture, SH3 3 spans 267–328 (KSKDYCKVIF…PDNFVKLLPP (62 aa)). Disordered regions lie at residues 328–444 (PDFE…LAGS) and 467–610 (DSVV…AAVE). The span at 355–390 (TERKHEIKKIPPERPEMLPNRTEEKERPEREPKLDL) shows a compositional bias: basic and acidic residues. Phosphoserine is present on Ser-436. A compositionally biased stretch (polar residues) spans 469–484 (VVSSTEKLSHPTTSRP). Residues 491 to 510 (PPSQSLTSSSLSSPDIFDSP) are compositionally biased toward low complexity. Residues Ser-509, Ser-511, and Ser-521 each carry the phosphoserine modification. Over residues 517–531 (EEHISLAHRGVDASK) the composition is skewed to basic and acidic residues. A compositionally biased stretch (polar residues) spans 535-546 (KTVTISQVSDNK). Residues 564 to 582 (APLSSAAPSPLSSSLGTAG) are compositionally biased toward low complexity. The residue at position 587 (Ser-587) is a Phosphoserine. Positions 602 to 664 (AASSQAAVEE…VNDIKKALQS (63 aa)) form a coiled coil.

Can self-associate and form homotetramers. Interacts with CD2, F-actin capping protein, PIK3R3, GRB2, EGFR, MET, BLNK, MAP3K4, PDCD6IP, SPRY2, ARHGAP17, ARHGAP27, MAGI2, CRK, BCAR1, SOS1, ASAP1, ARAP3, HIP1R, SYNJ2, INPP5D and STAP1. Interacts with E3 ubiquitin-protein ligases CBL and CBLB, but does not interact with CBLC. Two molecules of SH3KBP1 seem to bind through their respective SH3 1 domain to one molecule of CBLB. The interaction with CBL or CBLB and EGFR is increased upon EGF stimulation. The interaction with CBL is attenuated by PDCD6IP. Interacts (via SH3 domains) with ARAP1. The interaction is independent of EGF and does not affect ARAP1 GTPase-activating activity but is involved in regulating ubiquitination and endocytic trafficking of EGFR. ARAP1 competes with CBL for binding to SH3KBP1 and prevents interaction of CBL with SH3KBP1; this is likely to regulate SH3KBP1-mediated internalization of EGFR. Interacts through its proline-rich region with the SH3 domain of endophilins SH3GL1, SH3GL2 and SH3GL3. The SH3KBP1-endophilin complex seems to associate with a complex containing the phosphorylated receptor (EGFR or MET) and phosphorylated CBL. Probably associates with ASAP1 and phosphorylated EGFR. Probably part of a complex consisting of at least SH3KBP1, ASAP1 and ARAP3. Interacts with focal adhesion kinases PTK2/FAK1 and PTK2B/PYK2, probably as a dimer. Interacts with DAB2 and probably associates with chathrin through its interaction with DAB2. Part of a complex consisting of SH3KBP1, DAB2, and clathrin heavy chain. DAB2 and clathrin dissociate from SH3KBP1 following growth factor treatment, enabling interaction with CBL. Interacts with DDN and probably associates with MAGI2 through its interaction with DDN. Interacts with the SH3 domains of SRC tyrosine-protein kinases SRC, LCK, LYN, FGR, FYN and HCK. Interacts with TRADD, BIRC2, TRAF1, TRAF2 and TNFR1, and the association with a TNFR1-associated complex upon stimulation with TNF-alpha seems to be mediated by SRC. Interacts (via SH3 domains) with SHKBP1 (via PXXXPR motifs). Interaction with CBL is abolished in the presence of SHKBP1. Interacts (via SH3 domains) with ZFP36 (via extreme C-terminal region). Interacts with MAP3K4; this interaction enhances the association with ZFP36. As to quaternary structure, (Microbial infection) Interacts (via SH3 domains) with Chikungunya virus non-structural protein 3 (via C-terminus); this interaction plays a role in initiation of viral replication. Monoubiquitinated by CBL and CBLB after EGF stimulation; probably on its C-terminus. In terms of tissue distribution, ubiquitously expressed. Also expressed in some cancer cell lines.

It localises to the cytoplasm. The protein localises to the cytoskeleton. Its subcellular location is the cytoplasmic vesicle membrane. The protein resides in the synapse. It is found in the synaptosome. It localises to the cell junction. The protein localises to the focal adhesion. In terms of biological role, adapter protein involved in regulating diverse signal transduction pathways. Involved in the regulation of endocytosis and lysosomal degradation of ligand-induced receptor tyrosine kinases, including EGFR and MET/hepatocyte growth factor receptor, through an association with CBL and endophilins. The association with CBL, and thus the receptor internalization, may be inhibited by an interaction with PDCD6IP and/or SPRY2. Involved in regulation of ligand-dependent endocytosis of the IgE receptor. Attenuates phosphatidylinositol 3-kinase activity by interaction with its regulatory subunit. May be involved in regulation of cell adhesion; promotes the interaction between TTK2B and PDCD6IP. May be involved in the regulation of cellular stress response via the MAPK pathways through its interaction with MAP3K4. Is involved in modulation of tumor necrosis factor mediated apoptosis. Plays a role in the regulation of cell morphology and cytoskeletal organization. Required in the control of cell shape and migration. Has an essential role in the stimulation of B cell activation. In Homo sapiens (Human), this protein is SH3 domain-containing kinase-binding protein 1 (SH3KBP1).